A 295-amino-acid polypeptide reads, in one-letter code: tRNA pseudouridine synthase A (295 aa).

Aspartate 67 functions as the Nucleophile in the catalytic mechanism. Tyrosine 125 is a binding site for substrate.

This sequence belongs to the tRNA pseudouridine synthase TruA family. As to quaternary structure, homodimer.

The enzyme catalyses uridine(38/39/40) in tRNA = pseudouridine(38/39/40) in tRNA. In terms of biological role, formation of pseudouridine at positions 38, 39 and 40 in the anticodon stem and loop of transfer RNAs. This Prochlorococcus marinus (strain MIT 9303) protein is tRNA pseudouridine synthase A.